Here is a 268-residue protein sequence, read N- to C-terminus: Cytochrome c oxidase subunit 3 (268 aa).

A run of 7 helical transmembrane segments spans residues 23 to 43 (ILVS…MHGF), 49 to 69 (WVVF…RDII), 88 to 108 (IGFI…FWAF), 141 to 161 (TILL…LLGG), 166 to 186 (TLLG…CQYM), 203 to 223 (VFYF…IMLG), and 246 to 266 (ILYY…FYWW).

The protein belongs to the cytochrome c oxidase subunit 3 family. As to quaternary structure, component of the cytochrome c oxidase (complex IV, CIV), a multisubunit enzyme composed of a catalytic core of 3 subunits and several supernumerary subunits. The complex exists as a monomer or a dimer and forms supercomplexes (SCs) in the inner mitochondrial membrane with ubiquinol-cytochrome c oxidoreductase (cytochrome b-c1 complex, complex III, CIII).

Its subcellular location is the mitochondrion inner membrane. The enzyme catalyses 4 Fe(II)-[cytochrome c] + O2 + 8 H(+)(in) = 4 Fe(III)-[cytochrome c] + 2 H2O + 4 H(+)(out). In terms of biological role, component of the cytochrome c oxidase, the last enzyme in the mitochondrial electron transport chain which drives oxidative phosphorylation. The respiratory chain contains 3 multisubunit complexes succinate dehydrogenase (complex II, CII), ubiquinol-cytochrome c oxidoreductase (cytochrome b-c1 complex, complex III, CIII) and cytochrome c oxidase (complex IV, CIV), that cooperate to transfer electrons derived from NADH and succinate to molecular oxygen, creating an electrochemical gradient over the inner membrane that drives transmembrane transport and the ATP synthase. Cytochrome c oxidase is the component of the respiratory chain that catalyzes the reduction of oxygen to water. Electrons originating from reduced cytochrome c in the intermembrane space (IMS) are transferred via the dinuclear copper A center (CU(A)) of subunit 2 and heme A of subunit 1 to the active site in subunit 1, a binuclear center (BNC) formed by heme A3 and copper B (CU(B)). The BNC reduces molecular oxygen to 2 water molecules using 4 electrons from cytochrome c in the IMS and 4 protons from the mitochondrial matrix. The polypeptide is Cytochrome c oxidase subunit 3 (COX3) (Yarrowia lipolytica (strain CLIB 122 / E 150) (Yeast)).